The sequence spans 47 residues: Large ribosomal subunit protein bL27c-2 (47 aa).

It belongs to the bacterial ribosomal protein bL27 family.

The protein resides in the plastid. The protein localises to the chloroplast. This chain is Large ribosomal subunit protein bL27c-2, found in Cyanidium caldarium (Red alga).